The chain runs to 189 residues: Streptothricin acetyltransferase (189 aa).

Positions 44–189 (FALREVPADP…HALYMSMPCP (146 aa)) constitute an N-acetyltransferase domain. Residues 55 to 76 (LVKVFPDDGGSDGEDGAEGEDA) form a disordered region. Acidic residues predominate over residues 63–75 (GGSDGEDGAEGED).

The protein belongs to the acetyltransferase family. GNAT subfamily.

The enzyme catalyses streptothricin F + acetyl-CoA = N(beta)-acetylstreptothricin F + CoA + H(+). In terms of biological role, involved in resistance to streptothricin, a broad-spectrum antibiotic produced by streptomycetes. Detoxifies streptothricin via acetylation of the beta amino group of the first beta-lysyl moiety of streptothricin. This is Streptothricin acetyltransferase from Streptomyces lavendulae.